The primary structure comprises 156 residues: uncharacterized protein (156 aa).

3 consecutive transmembrane segments (helical) span residues 42-59 (LLMM…MTTV), 79-98 (ASFL…LLLY), and 105-127 (SLGR…VLGI).

It is found in the cell membrane. This is an uncharacterized protein from Archaeoglobus fulgidus (strain ATCC 49558 / DSM 4304 / JCM 9628 / NBRC 100126 / VC-16).